Reading from the N-terminus, the 488-residue chain is Probable malate:quinone oxidoreductase (488 aa).

The protein belongs to the MQO family. FAD is required as a cofactor.

The enzyme catalyses (S)-malate + a quinone = a quinol + oxaloacetate. The protein operates within carbohydrate metabolism; tricarboxylic acid cycle; oxaloacetate from (S)-malate (quinone route): step 1/1. In Neisseria meningitidis serogroup B (strain ATCC BAA-335 / MC58), this protein is Probable malate:quinone oxidoreductase.